The primary structure comprises 521 residues: Glucose-1-phosphate adenylyltransferase small subunit, chloroplastic (521 aa).

Residues 1-24 (MAASIGALKSSPSSHNCINERRND) form a disordered region. The N-terminal 72 residues, 1-72 (MAASIGALKS…RSPLIVSPKA (72 aa)), are a transit peptide targeting the chloroplast.

The protein belongs to the bacterial/plant glucose-1-phosphate adenylyltransferase family. Heterotetramer.

It localises to the plastid. Its subcellular location is the chloroplast. The enzyme catalyses alpha-D-glucose 1-phosphate + ATP + H(+) = ADP-alpha-D-glucose + diphosphate. Its pathway is glycan biosynthesis; starch biosynthesis. With respect to regulation, activated by 3'phosphoglycerate, inhibited by orthophosphate. Allosteric regulation. Its function is as follows. This protein plays a role in synthesis of starch. It catalyzes the synthesis of the activated glycosyl donor, ADP-glucose from Glc-1-P and ATP. The chain is Glucose-1-phosphate adenylyltransferase small subunit, chloroplastic from Solanum lycopersicum (Tomato).